The chain runs to 272 residues: Small ribosomal subunit protein mS23 (272 aa).

The disordered stretch occupies residues 233 to 272; the sequence is KENASKAAGDASAVSSEKQVEDDVVNFDESTDADQEVLHF. Residues 252–272 are compositionally biased toward acidic residues; it reads VEDDVVNFDESTDADQEVLHF.

This sequence belongs to the mitochondrion-specific ribosomal protein mS23 family. Component of the mitochondrial small ribosomal subunit.

It localises to the mitochondrion. This Candida glabrata (strain ATCC 2001 / BCRC 20586 / JCM 3761 / NBRC 0622 / NRRL Y-65 / CBS 138) (Yeast) protein is Small ribosomal subunit protein mS23 (RSM25).